Consider the following 122-residue polypeptide: Large ribosomal subunit protein uL14 (122 aa).

This sequence belongs to the universal ribosomal protein uL14 family. As to quaternary structure, part of the 50S ribosomal subunit. Forms a cluster with proteins L3 and L19. In the 70S ribosome, L14 and L19 interact and together make contacts with the 16S rRNA in bridges B5 and B8.

Functionally, binds to 23S rRNA. Forms part of two intersubunit bridges in the 70S ribosome. The chain is Large ribosomal subunit protein uL14 from Corynebacterium glutamicum (strain R).